Consider the following 103-residue polypeptide: MTGRGKGGKGLGKGGAKRHRKVLRDNIQGITKPAIRRLARRGGVKRISGLIYEETRGVLKVFLENVIRDAVTYTEHAKRKTVTAMDVVYALKRQGRTLYGFGG.

Over residues 1–14 the composition is skewed to gly residues; the sequence is MTGRGKGGKGLGKG. Residues 1–20 form a disordered region; sequence MTGRGKGGKGLGKGGAKRHR. Lys6 and Lys13 each carry N6-acetyl-N6-methyllysine; alternate. Residues 17-21 mediate DNA binding; that stretch reads KRHRK.

This sequence belongs to the histone H4 family. The nucleosome is a histone octamer containing two molecules each of H2A, H2B, H3 and H4 assembled in one H3-H4 heterotetramer and two H2A-H2B heterodimers. The octamer wraps approximately 147 bp of DNA.

The protein localises to the nucleus. The protein resides in the chromosome. Core component of nucleosome. Nucleosomes wrap and compact DNA into chromatin, limiting DNA accessibility to the cellular machineries which require DNA as a template. Histones thereby play a central role in transcription regulation, DNA repair, DNA replication and chromosomal stability. DNA accessibility is regulated via a complex set of post-translational modifications of histones, also called histone code, and nucleosome remodeling. The chain is Histone H4 (His4) from Myrmica ruginodis (Red ant).